A 327-amino-acid polypeptide reads, in one-letter code: 2-oxoglutarate-dependent dioxygenase traH (327 aa).

In terms of domain architecture, Fe2OG dioxygenase spans 183–290 (TTDAAMFLKL…YAVPAFWHGD (108 aa)). Positions 211, 213, and 270 each coordinate Fe cation. R280 contributes to the 2-oxoglutarate binding site.

This sequence belongs to the iron/ascorbate-dependent oxidoreductase family. It depends on Fe(2+) as a cofactor.

It functions in the pathway secondary metabolite biosynthesis. Functionally, 2-oxoglutarate-dependent dioxygenase; part of the tra gene cluster that produces terrestric acid. The clavatol biosynthesis cluster cla and the terrestric acid cluster tra are both involved in the production of peniphenones and penilactones. The non-reducing PKS claF is responsible for the formation of clavatol from successive condensations of 3 malonyl-CoA units, presumably with a simple acetyl-CoA starter unit, and 2 methylation steps. The esterase claE probably collaborates with claF by catalyzing the hydrolysis of ACP-bound acyl intermediates to free the ACP from stalled intermediates. The clavatol oxidase claD then converts clavatol to hydroxyclavatol. Spontaneous dehydration of hydroxyclavatol leads to the accumulation of the highly active ortho-quinone methide. On the other hand, the PKS-NRPS hybrid traA is involved in the formation of crustosic acid, with the help of traB and traD. The polyketide synthase module (PKS) of traA is responsible for the synthesis of the polyketide backbone via the condensation of an acetyl-CoA starter unit with 3 malonyl-CoA units. The downstream nonribosomal peptide synthetase (NRPS) module then amidates the carboxyl end of the polyketide with L-malic acid. Because traA lacks a designated enoylreductase (ER) domain, the required activity is provided the enoyl reductase traG. Crustosic acid undergoes decarboxylation and isomerization to the terrestric acid, catalyzed by the 2-oxoglutarate-dependent dioxygenase traH. Both acids are further converted to the 2 gamma-butyrolactones (R)-5-methyltetronic acid and (S)-5-carboxylmethyltetronic acid, with involvement of the cytochrome P450 monooxygenase claJ. Spontaneous addition of the methide to these gamma-butyrolactones leads to peniphenone D and penilactone D, which undergo again stereospecific attacking by methide to give penilactones A and B. The sequence is that of 2-oxoglutarate-dependent dioxygenase traH from Penicillium crustosum (Blue mold fungus).